A 354-amino-acid polypeptide reads, in one-letter code: UPF0283 membrane protein Meso_1416 (354 aa).

A disordered region spans residues 1–28 (MSEPRRPAAFRIEPAPSPSPEATREDVR). A run of 2 helical transmembrane segments spans residues 71–91 (LGAVFVAALGMLVSLAAGLWA) and 105–125 (LGWLGAALVAVAALALFAIVV).

This sequence belongs to the UPF0283 family.

The protein localises to the cell inner membrane. The polypeptide is UPF0283 membrane protein Meso_1416 (Chelativorans sp. (strain BNC1)).